The following is a 397-amino-acid chain: LIM/homeobox protein Lhx9 (397 aa).

LIM zinc-binding domains lie at Ala69–Val130 and Gln131–Gly193. Disordered stretches follow at residues Glu248–Thr272, Glu330–Asp364, and Ser378–Phe397. The segment at residues Thr267–Leu326 is a DNA-binding region (homeobox). The segment covering Leu353 to Asp364 has biased composition (low complexity).

Interacts with LDB1 and LDB2.

The protein resides in the nucleus. In terms of biological role, involved in gonadal development. The sequence is that of LIM/homeobox protein Lhx9 (LHX9) from Homo sapiens (Human).